We begin with the raw amino-acid sequence, 1014 residues long: Nebulette (1014 aa).

Positions 1 to 24 (MRVPVFEDIKDETEEEKIGEEENE) are disordered. Residues 9 to 24 (IKDETEEEKIGEEENE) show a composition bias toward acidic residues. Nebulin repeat units lie at residues 29 to 63 (FYKPVIEDLSMELARKCTELISDIRYKEEFKKSKD), 64 to 99 (KCTFVTDSPMLNHVKNIGAFISEAKYKGTIKADLSN), 100 to 136 (SLYKRMPATIDSVFAGEVTQLQSEVAYKQKHDAAKGF), 137 to 172 (SDYAHMKEPPEVKHAMEVNKHQSNISYRKDVQDTHT), 173 to 205 (YSAELDRPDIKMATQISKIISNAEYKKGQGIMN), 206 to 241 (KEPAVIGRPDFEHAVEASKLSSQIKYKEKFDNEMKD), 242 to 278 (KKHHYNPLESASFRQNQLAATLASNVKYKKDIQNMHD), 279 to 313 (PVSDLPNLLFLDHVLKASKMLSGREYKKLFEENKG), 314 to 348 (MYHFDADAVEHLHHKGNAVLQSQVKYKEEYEKNKG), 349 to 385 (KPMLEFVETPSYQASKEAQKMQSEKVYKEDFEKEIKG), 386 to 422 (RSSLDLDKTPEFLHVKYITNLLREKEYKKDLENEIKG), 423 to 459 (KGMELNSEVLDIQRAKRASEMASEKEYKKDLESIIKG), 460 to 496 (KGMQAGTDTLEMQHAKKAAEIASEKDYKRDLETEIKG), 497 to 533 (KGMQVSTDTLDVQRAKKASEMASQKQYKKDLENEIKG), 534 to 569 (KGMQVSMDIPDILRAKRTSEIYSQRKYKDEAEKMLS), 570 to 599 (NYSTIADTPEIQRIKTTQQNISAVFYKKEV), 600 to 635 (GAGTAVKDSPEIERVKKNQQNISSVKYKEEIKHATA), 636 to 666 (ISDPPELKRVKENQKNISNLQYKEQNYKATP), 667 to 693 (VSMTPEIERVRRNQEQLSAVKYKGELQ), 694 to 728 (RGTAISDPPELKRAKENQKNISNVYYRGQLGRATT), 729 to 759 (LSVTPEMERVKKNQENISSVKYTQDHKQMKG), 760 to 794 (RPSLILDTPAMRHVKEAQNHISMVKYHEDFEKTKG), and 795 to 830 (RGFTPVVDDPVTERVRKNTQVVSDAAYKGVHPHIVE). Aspartate 96 bears the Omega-N-methylarginine mark. Arginine 795 carries the omega-N-methylarginine modification. Residues 836–953 (GIIVDLKVWR…VSSMRSMQHS (118 aa)) are linker. In terms of domain architecture, SH3 spans 954–1014 (PNLRTYRAMY…LPANYIEFVN (61 aa)).

As to quaternary structure, interacts (via nebulin repeats 1-5) with DESM (via rod region). Interacts (via SH3 domain) with XIRP2. Interacts with ZYX/Zyxin. In terms of tissue distribution, abundantly expressed in cardiac muscle, but not in skeletal or smooth muscle. Localized to Z-lines in cardiac cells and to dense bodies in nonmuscle cells. Isoform 2 is expressed in non-muscle cells such as in fibroblasts.

It is found in the cytoplasm. Its function is as follows. Binds to actin and plays an important role in the assembly of the Z-disk. May functionally link sarcomeric actin to the desmin intermediate filaments in the heart muscle sarcomeres. Functionally, may play a role in the assembly of focal adhesions. In Homo sapiens (Human), this protein is Nebulette.